The following is a 206-amino-acid chain: Thymidylate kinase (206 aa).

Residue 11–18 (GIDGAGKT) coordinates ATP.

It belongs to the thymidylate kinase family.

The enzyme catalyses dTMP + ATP = dTDP + ADP. Phosphorylation of dTMP to form dTDP in both de novo and salvage pathways of dTTP synthesis. This chain is Thymidylate kinase, found in Burkholderia thailandensis (strain ATCC 700388 / DSM 13276 / CCUG 48851 / CIP 106301 / E264).